The sequence spans 244 residues: Glutathione-independent glyoxalase hsp3101 (244 aa).

Residues Cys139, His140, and Glu173 contribute to the active site.

The protein belongs to the peptidase C56 family. HSP31-like subfamily.

It localises to the cytoplasm. Its subcellular location is the nucleus. It catalyses the reaction methylglyoxal + H2O = (R)-lactate + H(+). Catalyzes the conversion of methylglyoxal (MG) to D-lactate in a single glutathione (GSH)-independent step. May play a role in detoxifying endogenously produced glyoxals. Involved in protection against reactive oxygen species (ROS). This Schizosaccharomyces pombe (strain 972 / ATCC 24843) (Fission yeast) protein is Glutathione-independent glyoxalase hsp3101.